A 138-amino-acid chain; its full sequence is Large ribosomal subunit protein bL17 (138 aa).

This sequence belongs to the bacterial ribosomal protein bL17 family. Part of the 50S ribosomal subunit. Contacts protein L32.

This chain is Large ribosomal subunit protein bL17, found in Methylorubrum extorquens (strain PA1) (Methylobacterium extorquens).